The sequence spans 621 residues: Bifunctional 3'-phosphoadenosine 5'-phosphosulfate synthase 2 (621 aa).

The interval 1 to 216 (MSANFKMNHK…VVELLQEQNI (216 aa)) is adenylyl-sulfate kinase. 53–58 (GAGKTT) contributes to the ATP binding site. Residues 80–83 (DNVR), phenylalanine 92, 97–100 (REEN), 123–124 (IS), lysine 162, and 175–176 (GF) each bind adenosine 5'-phosphosulfate. Residues serine 198, 415–418 (QLRN), 517–521 (GRDPA), and alanine 559 each bind ATP. Positions 225-621 (IHELFVPENK…DYYRSLEKTN (397 aa)) are sulfate adenylyltransferase.

In the N-terminal section; belongs to the APS kinase family. This sequence in the C-terminal section; belongs to the sulfate adenylyltransferase family. In terms of tissue distribution, expressed in liver, cartilage, skin and brain.

The enzyme catalyses sulfate + ATP + H(+) = adenosine 5'-phosphosulfate + diphosphate. The catalysed reaction is adenosine 5'-phosphosulfate + ATP = 3'-phosphoadenylyl sulfate + ADP + H(+). Its pathway is sulfur metabolism; sulfate assimilation. Bifunctional enzyme with both ATP sulfurylase and APS kinase activity, which mediates two steps in the sulfate activation pathway. The first step is the transfer of a sulfate group to ATP to yield adenosine 5'-phosphosulfate (APS), and the second step is the transfer of a phosphate group from ATP to APS yielding 3'-phosphoadenylylsulfate/PAPS, the activated sulfate donor used by sulfotransferases. In mammals, PAPS is the sole source of sulfate while APS appears to only be an intermediate in the sulfate-activation pathway. May have an important role in skeletogenesis during postnatal growth. In Mus musculus (Mouse), this protein is Bifunctional 3'-phosphoadenosine 5'-phosphosulfate synthase 2 (Papss2).